The primary structure comprises 353 residues: Ribosome biogenesis protein BRX1 homolog (353 aa).

Positions 1-10 (MAATKRKRRG) are enriched in basic residues. The disordered stretch occupies residues 1–46 (MAATKRKRRGGFAVQAKKPKRNEKDAEPPAKRHATAEEVEEEERDR). Basic and acidic residues predominate over residues 22–36 (NEKDAEPPAKRHATA). The 190-residue stretch at 60–249 (ERILIFSSRG…LIKIFQGSFG (190 aa)) folds into the Brix domain. Lys-160 participates in a covalent cross-link: Glycyl lysine isopeptide (Lys-Gly) (interchain with G-Cter in SUMO2). Ser-261 carries the post-translational modification Phosphoserine. Lys-276 is subject to N6-acetyllysine. Residues Lys-314 and Lys-322 each participate in a glycyl lysine isopeptide (Lys-Gly) (interchain with G-Cter in SUMO2) cross-link.

This sequence belongs to the BRX1 family.

The protein resides in the nucleus. It is found in the nucleolus. Required for biogenesis of the 60S ribosomal subunit. The sequence is that of Ribosome biogenesis protein BRX1 homolog (BRIX1) from Pongo abelii (Sumatran orangutan).